Reading from the N-terminus, the 86-residue chain is Ferredoxin-like protein YgcO (86 aa).

The region spanning 45-74 (GNLRIDYRSCLECGTCRLLCDESTLQQWRY) is the 4Fe-4S ferredoxin-type domain.

Belongs to the bacterial-type ferredoxin family. FixX subfamily.

Its function is as follows. Could be a 3Fe-4S cluster-containing protein. Probably participates in a redox process with YgcN, YgcQ and YgcR. This is Ferredoxin-like protein YgcO (ygcO) from Escherichia coli (strain K12).